The following is a 713-amino-acid chain: Phosphoribosylformylglycinamidine synthase subunit PurL (713 aa).

Residue H32 is part of the active site. ATP is bound at residue Y35. E76 lines the Mg(2+) pocket. Substrate contacts are provided by residues 77–80 (SHNH) and R99. H78 serves as the catalytic Proton acceptor. Residue D100 coordinates Mg(2+). A substrate-binding site is contributed by Q224. Residue D252 participates in Mg(2+) binding. 296–298 (ESQ) contacts substrate. The ATP site is built by D471 and G508. Mg(2+) is bound at residue N509. Substrate is bound at residue S511.

The protein belongs to the FGAMS family. Monomer. Part of the FGAM synthase complex composed of 1 PurL, 1 PurQ and 2 PurS subunits.

It is found in the cytoplasm. The catalysed reaction is N(2)-formyl-N(1)-(5-phospho-beta-D-ribosyl)glycinamide + L-glutamine + ATP + H2O = 2-formamido-N(1)-(5-O-phospho-beta-D-ribosyl)acetamidine + L-glutamate + ADP + phosphate + H(+). It functions in the pathway purine metabolism; IMP biosynthesis via de novo pathway; 5-amino-1-(5-phospho-D-ribosyl)imidazole from N(2)-formyl-N(1)-(5-phospho-D-ribosyl)glycinamide: step 1/2. Its function is as follows. Part of the phosphoribosylformylglycinamidine synthase complex involved in the purines biosynthetic pathway. Catalyzes the ATP-dependent conversion of formylglycinamide ribonucleotide (FGAR) and glutamine to yield formylglycinamidine ribonucleotide (FGAM) and glutamate. The FGAM synthase complex is composed of three subunits. PurQ produces an ammonia molecule by converting glutamine to glutamate. PurL transfers the ammonia molecule to FGAR to form FGAM in an ATP-dependent manner. PurS interacts with PurQ and PurL and is thought to assist in the transfer of the ammonia molecule from PurQ to PurL. This Thermococcus sibiricus (strain DSM 12597 / MM 739) protein is Phosphoribosylformylglycinamidine synthase subunit PurL.